The chain runs to 86 residues: Exodeoxyribonuclease 7 small subunit (86 aa).

Residues 1 to 27 are disordered; the sequence is MQDELFETEKIPPKNTKNAKNAPKKSF.

The protein belongs to the XseB family. Heterooligomer composed of large and small subunits.

The protein localises to the cytoplasm. The catalysed reaction is Exonucleolytic cleavage in either 5'- to 3'- or 3'- to 5'-direction to yield nucleoside 5'-phosphates.. Bidirectionally degrades single-stranded DNA into large acid-insoluble oligonucleotides, which are then degraded further into small acid-soluble oligonucleotides. This is Exodeoxyribonuclease 7 small subunit from Helicobacter pylori (strain G27).